The following is a 93-amino-acid chain: Alpha-defensin 10 (93 aa).

An N-terminal signal peptide occupies residues 1-19; that stretch reads MKTLVLLSALVLLAFQVQA. Positions 20–58 are excised as a propeptide; that stretch reads DPIQNTDEETKTEEQPGEDDQAVSVSFGDPEGSSLQEES. The disordered stretch occupies residues 22-56; sequence IQNTDEETKTEEQPGEDDQAVSVSFGDPEGSSLQE. 3 disulfides stabilise this stretch: cysteine 64/cysteine 92, cysteine 66/cysteine 81, and cysteine 71/cysteine 91.

It belongs to the alpha-defensin family. Paneth cells of the small bowel.

It is found in the secreted. Functionally, probably contributes to the antimicrobial barrier function of the small bowel mucosa. The polypeptide is Alpha-defensin 10 (Defa10) (Mus musculus (Mouse)).